The chain runs to 104 residues: uncharacterized protein (104 aa).

Disordered stretches follow at residues 1-48 (MLRR…NNQP) and 66-104 (QENTSSNNNNNNNHGDDENGSRYGHGSSLGGDVHSRRCS).

This is an uncharacterized protein from Saccharomyces cerevisiae (strain ATCC 204508 / S288c) (Baker's yeast).